Reading from the N-terminus, the 220-residue chain is Large ribosomal subunit protein bL25 (220 aa).

It belongs to the bacterial ribosomal protein bL25 family. CTC subfamily. As to quaternary structure, part of the 50S ribosomal subunit; part of the 5S rRNA/L5/L18/L25 subcomplex. Contacts the 5S rRNA. Binds to the 5S rRNA independently of L5 and L18.

Functionally, this is one of the proteins that binds to the 5S RNA in the ribosome where it forms part of the central protuberance. The sequence is that of Large ribosomal subunit protein bL25 from Zymomonas mobilis subsp. mobilis (strain ATCC 31821 / ZM4 / CP4).